The primary structure comprises 588 residues: Aspartate--tRNA ligase (588 aa).

Position 174 (glutamate 174) interacts with L-aspartate. The aspartate stretch occupies residues 198–201; it reads QLFK. Arginine 220 provides a ligand contact to L-aspartate. Residues 220–222 and glutamine 229 contribute to the ATP site; that span reads RDE. Histidine 448 provides a ligand contact to L-aspartate. Glutamate 482 is a binding site for ATP. Arginine 489 provides a ligand contact to L-aspartate. 534-537 contributes to the ATP binding site; that stretch reads GIDR.

Belongs to the class-II aminoacyl-tRNA synthetase family. Type 1 subfamily. As to quaternary structure, homodimer.

It is found in the cytoplasm. The enzyme catalyses tRNA(Asp) + L-aspartate + ATP = L-aspartyl-tRNA(Asp) + AMP + diphosphate. Catalyzes the attachment of L-aspartate to tRNA(Asp) in a two-step reaction: L-aspartate is first activated by ATP to form Asp-AMP and then transferred to the acceptor end of tRNA(Asp). In Xanthomonas campestris pv. campestris (strain B100), this protein is Aspartate--tRNA ligase.